The following is a 313-amino-acid chain: Ribosomal RNA small subunit methyltransferase H (313 aa).

S-adenosyl-L-methionine-binding positions include 35 to 37, Asp-55, Phe-79, Asp-101, and Gln-108; that span reads GGH. The tract at residues 276–300 is disordered; sequence QGGPTLKSVGKMMPPDDEVADNPRA.

Belongs to the methyltransferase superfamily. RsmH family.

Its subcellular location is the cytoplasm. It carries out the reaction cytidine(1402) in 16S rRNA + S-adenosyl-L-methionine = N(4)-methylcytidine(1402) in 16S rRNA + S-adenosyl-L-homocysteine + H(+). Functionally, specifically methylates the N4 position of cytidine in position 1402 (C1402) of 16S rRNA. This is Ribosomal RNA small subunit methyltransferase H from Dickeya chrysanthemi (strain Ech1591) (Dickeya zeae (strain Ech1591)).